A 185-amino-acid polypeptide reads, in one-letter code: Large ribosomal subunit protein uL5 (185 aa).

This sequence belongs to the universal ribosomal protein uL5 family. As to quaternary structure, part of the 50S ribosomal subunit; part of the 5S rRNA/L5/L18/L25 subcomplex. Contacts the 5S rRNA and the P site tRNA. Forms a bridge to the 30S subunit in the 70S ribosome.

This is one of the proteins that bind and probably mediate the attachment of the 5S RNA into the large ribosomal subunit, where it forms part of the central protuberance. In the 70S ribosome it contacts protein S13 of the 30S subunit (bridge B1b), connecting the 2 subunits; this bridge is implicated in subunit movement. Contacts the P site tRNA; the 5S rRNA and some of its associated proteins might help stabilize positioning of ribosome-bound tRNAs. The chain is Large ribosomal subunit protein uL5 from Bradyrhizobium sp. (strain BTAi1 / ATCC BAA-1182).